The chain runs to 464 residues: Soluble pyridine nucleotide transhydrogenase (464 aa).

Residue 35-44 participates in FAD binding; that stretch reads DSRRQVGGNC.

This sequence belongs to the class-I pyridine nucleotide-disulfide oxidoreductase family. The cofactor is FAD.

It is found in the cytoplasm. It carries out the reaction NAD(+) + NADPH = NADH + NADP(+). Functionally, conversion of NADPH, generated by peripheral catabolic pathways, to NADH, which can enter the respiratory chain for energy generation. This is Soluble pyridine nucleotide transhydrogenase from Pseudomonas putida (strain W619).